The sequence spans 83 residues: Putative membrane protein insertion efficiency factor (83 aa).

Belongs to the UPF0161 family.

It localises to the cell inner membrane. Could be involved in insertion of integral membrane proteins into the membrane. The sequence is that of Putative membrane protein insertion efficiency factor from Pelagibacter ubique (strain HTCC1062).